Consider the following 359-residue polypeptide: Peptide chain release factor 1 (359 aa).

An N5-methylglutamine modification is found at glutamine 238.

The protein belongs to the prokaryotic/mitochondrial release factor family. Methylated by PrmC. Methylation increases the termination efficiency of RF1.

It is found in the cytoplasm. Peptide chain release factor 1 directs the termination of translation in response to the peptide chain termination codons UAG and UAA. The polypeptide is Peptide chain release factor 1 (Mycoplasmopsis pulmonis (strain UAB CTIP) (Mycoplasma pulmonis)).